A 414-amino-acid polypeptide reads, in one-letter code: Gamma-glutamyl phosphate reductase (414 aa).

The protein belongs to the gamma-glutamyl phosphate reductase family.

The protein resides in the cytoplasm. The catalysed reaction is L-glutamate 5-semialdehyde + phosphate + NADP(+) = L-glutamyl 5-phosphate + NADPH + H(+). Its pathway is amino-acid biosynthesis; L-proline biosynthesis; L-glutamate 5-semialdehyde from L-glutamate: step 2/2. Catalyzes the NADPH-dependent reduction of L-glutamate 5-phosphate into L-glutamate 5-semialdehyde and phosphate. The product spontaneously undergoes cyclization to form 1-pyrroline-5-carboxylate. The sequence is that of Gamma-glutamyl phosphate reductase from Caldanaerobacter subterraneus subsp. tengcongensis (strain DSM 15242 / JCM 11007 / NBRC 100824 / MB4) (Thermoanaerobacter tengcongensis).